The primary structure comprises 187 residues: Elongation factor P (187 aa).

Belongs to the elongation factor P family.

The protein resides in the cytoplasm. It functions in the pathway protein biosynthesis; polypeptide chain elongation. Functionally, involved in peptide bond synthesis. Stimulates efficient translation and peptide-bond synthesis on native or reconstituted 70S ribosomes in vitro. Probably functions indirectly by altering the affinity of the ribosome for aminoacyl-tRNA, thus increasing their reactivity as acceptors for peptidyl transferase. The chain is Elongation factor P from Chelativorans sp. (strain BNC1).